The following is a 200-amino-acid chain: ATP-dependent Clp protease proteolytic subunit 3 (200 aa).

Serine 101 acts as the Nucleophile in catalysis. Histidine 126 is an active-site residue.

It belongs to the peptidase S14 family. As to quaternary structure, fourteen ClpP subunits assemble into 2 heptameric rings which stack back to back to give a disk-like structure with a central cavity, resembling the structure of eukaryotic proteasomes.

Its subcellular location is the cytoplasm. The enzyme catalyses Hydrolysis of proteins to small peptides in the presence of ATP and magnesium. alpha-casein is the usual test substrate. In the absence of ATP, only oligopeptides shorter than five residues are hydrolyzed (such as succinyl-Leu-Tyr-|-NHMec, and Leu-Tyr-Leu-|-Tyr-Trp, in which cleavage of the -Tyr-|-Leu- and -Tyr-|-Trp bonds also occurs).. Functionally, cleaves peptides in various proteins in a process that requires ATP hydrolysis. Has a chymotrypsin-like activity. Plays a major role in the degradation of misfolded proteins. This Synechococcus sp. (strain CC9605) protein is ATP-dependent Clp protease proteolytic subunit 3.